The sequence spans 280 residues: Digeranylgeranylglyceryl phosphate synthase (280 aa).

A run of 9 helical transmembrane segments spans residues 4 to 24 (AAYL…AGIL), 27 to 47 (IIAT…VLTI), 83 to 103 (LMYA…FTPL), 104 to 124 (PLAG…SFLK), 128 to 148 (LIGN…GGAI), 150 to 170 (GTQG…VMLA), 199 to 219 (ATIY…LLLY), 222 to 242 (WGAF…FGAI), and 260 to 280 (KILK…AVLL).

This sequence belongs to the UbiA prenyltransferase family. DGGGP synthase subfamily. The cofactor is Mg(2+).

The protein localises to the cell membrane. It catalyses the reaction sn-3-O-(geranylgeranyl)glycerol 1-phosphate + (2E,6E,10E)-geranylgeranyl diphosphate = 2,3-bis-O-(geranylgeranyl)-sn-glycerol 1-phosphate + diphosphate. Its pathway is membrane lipid metabolism; glycerophospholipid metabolism. In terms of biological role, prenyltransferase that catalyzes the transfer of the geranylgeranyl moiety of geranylgeranyl diphosphate (GGPP) to the C2 hydroxyl of (S)-3-O-geranylgeranylglyceryl phosphate (GGGP). This reaction is the second ether-bond-formation step in the biosynthesis of archaeal membrane lipids. The polypeptide is Digeranylgeranylglyceryl phosphate synthase (Methanospirillum hungatei JF-1 (strain ATCC 27890 / DSM 864 / NBRC 100397 / JF-1)).